Here is a 265-residue protein sequence, read N- to C-terminus: Glutamate racemase (265 aa).

Substrate is bound by residues Asp9–Ser10 and Tyr41–Ser42. Catalysis depends on Cys73, which acts as the Proton donor/acceptor. Asn74–Thr75 contributes to the substrate binding site. Catalysis depends on Cys184, which acts as the Proton donor/acceptor. Thr185–His186 serves as a coordination point for substrate.

It belongs to the aspartate/glutamate racemases family.

It carries out the reaction L-glutamate = D-glutamate. It participates in cell wall biogenesis; peptidoglycan biosynthesis. In terms of biological role, provides the (R)-glutamate required for cell wall biosynthesis. The chain is Glutamate racemase from Actinobacillus pleuropneumoniae serotype 5b (strain L20).